A 222-amino-acid polypeptide reads, in one-letter code: Sigma non-opioid intracellular receptor 1 (222 aa).

Over 1–7 (MGVAGPW) the chain is Lumenal. The chain crosses the membrane as a helical span at residues 8 to 29 (VLRVGLGLGAFALLLQGLRGWL). Topologically, residues 30 to 222 (ACKRYEFQPA…ASAFFSTLGC (193 aa)) are cytoplasmic. Residues 98 to 105 (SLTEYVLL) are important for ligand-binding. The interval 176–222 (FVPSTLAFALADTLFSTQDFITLFYTLRAYTKGLLLEASAFFSTLGC) is C-terminal hydrophobic region.

This sequence belongs to the ERG2 family. As to quaternary structure, homotrimer.

Its subcellular location is the nucleus inner membrane. It is found in the nucleus outer membrane. The protein localises to the nucleus envelope. The protein resides in the cytoplasmic vesicle. It localises to the endoplasmic reticulum membrane. Its subcellular location is the membrane. Functionally, may function in lipid transport from the endoplasmic reticulum and be involved in a wide array of cellular functions probably through regulation of the biogenesis of lipid microdomains at the plasma membrane. May regulate calcium efflux at the endoplasmic reticulum. The chain is Sigma non-opioid intracellular receptor 1 (SIGMAR1) from Gallus gallus (Chicken).